A 274-amino-acid polypeptide reads, in one-letter code: Bis(5'-nucleosyl)-tetraphosphatase, symmetrical (274 aa).

Belongs to the Ap4A hydrolase family.

The enzyme catalyses P(1),P(4)-bis(5'-adenosyl) tetraphosphate + H2O = 2 ADP + 2 H(+). Functionally, hydrolyzes diadenosine 5',5'''-P1,P4-tetraphosphate to yield ADP. This Erwinia tasmaniensis (strain DSM 17950 / CFBP 7177 / CIP 109463 / NCPPB 4357 / Et1/99) protein is Bis(5'-nucleosyl)-tetraphosphatase, symmetrical.